Reading from the N-terminus, the 500-residue chain is Aspartyl/glutamyl-tRNA(Asn/Gln) amidotransferase subunit B (500 aa).

This sequence belongs to the GatB/GatE family. GatB subfamily. In terms of assembly, heterotrimer of A, B and C subunits.

It catalyses the reaction L-glutamyl-tRNA(Gln) + L-glutamine + ATP + H2O = L-glutaminyl-tRNA(Gln) + L-glutamate + ADP + phosphate + H(+). The enzyme catalyses L-aspartyl-tRNA(Asn) + L-glutamine + ATP + H2O = L-asparaginyl-tRNA(Asn) + L-glutamate + ADP + phosphate + 2 H(+). Allows the formation of correctly charged Asn-tRNA(Asn) or Gln-tRNA(Gln) through the transamidation of misacylated Asp-tRNA(Asn) or Glu-tRNA(Gln) in organisms which lack either or both of asparaginyl-tRNA or glutaminyl-tRNA synthetases. The reaction takes place in the presence of glutamine and ATP through an activated phospho-Asp-tRNA(Asn) or phospho-Glu-tRNA(Gln). This Brucella melitensis biotype 2 (strain ATCC 23457) protein is Aspartyl/glutamyl-tRNA(Asn/Gln) amidotransferase subunit B.